A 196-amino-acid polypeptide reads, in one-letter code: Endoribonuclease YbeY (196 aa).

The Zn(2+) site is built by His-120, His-124, and His-130.

Belongs to the endoribonuclease YbeY family. Zn(2+) is required as a cofactor.

The protein resides in the cytoplasm. In terms of biological role, single strand-specific metallo-endoribonuclease involved in late-stage 70S ribosome quality control and in maturation of the 3' terminus of the 16S rRNA. The polypeptide is Endoribonuclease YbeY (Corynebacterium diphtheriae (strain ATCC 700971 / NCTC 13129 / Biotype gravis)).